The sequence spans 384 residues: MAP kinase-activated protein kinase 3 (384 aa).

Met1 is subject to N-acetylmethionine. The interval 1–33 is disordered; that stretch reads MDGETAGEKGSLVPQPGALGAPALGGAPAPGVR. Residues 14 to 31 are compositionally biased toward low complexity; the sequence is PQPGALGAPALGGAPAPG. Residues 46-306 enclose the Protein kinase domain; the sequence is QLSKQVLGLG…IMQFMNHPWI (261 aa). ATP-binding positions include 52–60 and Lys75; that span reads LGLGVNGKV. The active-site Proton acceptor is the Asp168. Phosphothreonine; by MAPK14 is present on Thr203. Ser253 bears the Phosphoserine; by MAPK14 mark. Residue Ser309 is modified to Phosphoserine; by autocatalysis. Positions 309 to 345 are autoinhibitory helix; sequence SMEVPQTPLHTARVLEEDKDHWDDVKEEMTSALATMR. Phosphothreonine; by MAPK14 is present on Thr315. Residues 337-346 carry the Nuclear export signal (NES) motif; that stretch reads MTSALATMRV. The tract at residues 347 to 371 is p38 MAPK-binding site; it reads DYDQVKIKDLKTSNNRLLNKRRKKQ. 2 short sequence motifs (bipartite nuclear localization signal) span residues 352-355 and 366-370; these read KIKD and KRRKK. The interval 359–384 is disordered; sequence SNNRLLNKRRKKQGGSSSASPGCNNQ. Residues 372 to 384 are compositionally biased toward polar residues; it reads GGSSSASPGCNNQ.

It belongs to the protein kinase superfamily. CAMK Ser/Thr protein kinase family. As to quaternary structure, heterodimer with p38-alpha/MAPK14. The heterodimer with p38-alpha/MAPK14 forms a stable complex: molecules are positioned 'face to face' so that the ATP-binding sites of both kinases are at the heterodimer interface. Interacts with TCF3 and with polycomb proteins, such as PCH2 and BMI1/PCGF4. Post-translationally, phosphorylated and activated by MAPK1/ERK2 and MAPK3/ERK1. Phosphorylated and activated by MAP kinase p38-alpha/MAPK14 at Thr-203, Ser-253 and Thr-315.

It is found in the nucleus. It localises to the cytoplasm. It catalyses the reaction L-seryl-[protein] + ATP = O-phospho-L-seryl-[protein] + ADP + H(+). The catalysed reaction is L-threonyl-[protein] + ATP = O-phospho-L-threonyl-[protein] + ADP + H(+). Activated following phosphorylation by p38-alpha/MAPK14 following various stresses. Inhibited by ligand 5B (2'-[2-(1,3-benzodioxol-5-yl)pyrimidin-4-yl]-5',6'-dihydrospiro[piperidine-4,7'-pyrrolo[3,2-c]pyridin]- 4'(1'h)-one) and ligand P4O (2-[2-(2-fluorophenyl)pyridin-4-yl]-1,5,6,7-tetrahydro- 4h-pyrrolo[3,2-c]pyridin-4-one), 2 ATP-competitive inhibitors. Functionally, stress-activated serine/threonine-protein kinase involved in cytokines production, endocytosis, cell migration, chromatin remodeling and transcriptional regulation. Following stress, it is phosphorylated and activated by MAP kinase p38-alpha/MAPK14, leading to phosphorylation of substrates. Phosphorylates serine in the peptide sequence, Hyd-X-R-X(2)-S, where Hyd is a large hydrophobic residue. MAPKAPK2 and MAPKAPK3, share the same function and substrate specificity, but MAPKAPK3 kinase activity and level in protein expression are lower compared to MAPKAPK2. Phosphorylates HSP27/HSPB1, KRT18, KRT20, RCSD1, RPS6KA3, TAB3 and TTP/ZFP36. Mediates phosphorylation of HSP27/HSPB1 in response to stress, leading to dissociate HSP27/HSPB1 from large small heat-shock protein (sHsps) oligomers and impair their chaperone activities and ability to protect against oxidative stress effectively. Involved in inflammatory response by regulating tumor necrosis factor (TNF) and IL6 production post-transcriptionally: acts by phosphorylating AU-rich elements (AREs)-binding proteins, such as TTP/ZFP36, leading to regulate the stability and translation of TNF and IL6 mRNAs. Phosphorylation of TTP/ZFP36, a major post-transcriptional regulator of TNF, promotes its binding to 14-3-3 proteins and reduces its ARE mRNA affinity leading to inhibition of dependent degradation of ARE-containing transcript. Involved in toll-like receptor signaling pathway (TLR) in dendritic cells: required for acute TLR-induced macropinocytosis by phosphorylating and activating RPS6KA3. Also acts as a modulator of Polycomb-mediated repression. The sequence is that of MAP kinase-activated protein kinase 3 (Mapkapk3) from Rattus norvegicus (Rat).